The sequence spans 83 residues: Large ribosomal subunit protein eL31 (83 aa).

Belongs to the eukaryotic ribosomal protein eL31 family.

The sequence is that of Large ribosomal subunit protein eL31 from Methanococcus maripaludis (strain DSM 14266 / JCM 13030 / NBRC 101832 / S2 / LL).